The chain runs to 215 residues: uncharacterized protein (215 aa).

Positions 25-48 (LKSASPGPAPASQQASSFGSAPAQ) are disordered. Over residues 27 to 47 (SASPGPAPASQQASSFGSAPA) the composition is skewed to low complexity.

This is an uncharacterized protein from Homo sapiens (Human).